We begin with the raw amino-acid sequence, 261 residues long: Pyrroline-5-carboxylate reductase (261 aa).

Belongs to the pyrroline-5-carboxylate reductase family.

It localises to the cytoplasm. It carries out the reaction L-proline + NADP(+) = (S)-1-pyrroline-5-carboxylate + NADPH + 2 H(+). The catalysed reaction is L-proline + NAD(+) = (S)-1-pyrroline-5-carboxylate + NADH + 2 H(+). The protein operates within amino-acid biosynthesis; L-proline biosynthesis; L-proline from L-glutamate 5-semialdehyde: step 1/1. Its function is as follows. Catalyzes the reduction of 1-pyrroline-5-carboxylate (PCA) to L-proline. The protein is Pyrroline-5-carboxylate reductase of Thermus thermophilus (strain ATCC BAA-163 / DSM 7039 / HB27).